The sequence spans 516 residues: Prolyl 4-hydroxylase subunit alpha-1 (516 aa).

N-linked (GlcNAc...) asparagine glycosylation is present at Asn97. One copy of the TPR repeat lies at 189–222 (VYILDYLSYAVYQQGDLSKAMMLTKRLLELDPEH). Asn243 carries N-linked (GlcNAc...) asparagine glycosylation. In terms of domain architecture, Fe2OG dioxygenase spans 393–501 (TAEELQVANY…KWVSNKWLHE (109 aa)). Fe cation contacts are provided by His411, Asp413, and His482. Lys492 contacts 2-oxoglutarate.

It belongs to the P4HA family. In terms of assembly, heterotetramer of two alpha chains and two beta chains (the beta chain is the multi-functional PDI). The cofactor is Fe(2+). L-ascorbate serves as cofactor.

It is found in the endoplasmic reticulum lumen. It catalyses the reaction L-prolyl-[collagen] + 2-oxoglutarate + O2 = trans-4-hydroxy-L-prolyl-[collagen] + succinate + CO2. Functionally, catalyzes the post-translational formation of 4-hydroxyproline in -Xaa-Pro-Gly- sequences in collagens and other proteins. This Gallus gallus (Chicken) protein is Prolyl 4-hydroxylase subunit alpha-1 (P4HA1).